Consider the following 476-residue polypeptide: 3-isopropylmalate dehydratase large subunit (476 aa).

3 residues coordinate [4Fe-4S] cluster: Cys-357, Cys-417, and Cys-420.

It belongs to the aconitase/IPM isomerase family. LeuC type 1 subfamily. Heterodimer of LeuC and LeuD. [4Fe-4S] cluster is required as a cofactor.

It catalyses the reaction (2R,3S)-3-isopropylmalate = (2S)-2-isopropylmalate. Its pathway is amino-acid biosynthesis; L-leucine biosynthesis; L-leucine from 3-methyl-2-oxobutanoate: step 2/4. Its function is as follows. Catalyzes the isomerization between 2-isopropylmalate and 3-isopropylmalate, via the formation of 2-isopropylmaleate. The polypeptide is 3-isopropylmalate dehydratase large subunit (Mycolicibacterium paratuberculosis (strain ATCC BAA-968 / K-10) (Mycobacterium paratuberculosis)).